Reading from the N-terminus, the 307-residue chain is tRNA pseudouridine synthase B (307 aa).

Residue D39 is the Nucleophile of the active site.

This sequence belongs to the pseudouridine synthase TruB family. Type 1 subfamily.

The enzyme catalyses uridine(55) in tRNA = pseudouridine(55) in tRNA. In terms of biological role, responsible for synthesis of pseudouridine from uracil-55 in the psi GC loop of transfer RNAs. This is tRNA pseudouridine synthase B from Lactiplantibacillus plantarum (strain ATCC BAA-793 / NCIMB 8826 / WCFS1) (Lactobacillus plantarum).